We begin with the raw amino-acid sequence, 490 residues long: Trigger factor (490 aa).

The 87-residue stretch at 161–247 folds into the PPIase FKBP-type domain; sequence GDQVIVDIEA…VHEVKEAELP (87 aa). Low complexity predominate over residues 441–460; that stretch reads AEPAEGTEPAAEEAVTAPEV. Positions 441 to 490 are disordered; sequence AEPAEGTEPAAEEAVTAPEVVDGETTPASESAESLAVTETGSRADDDQAS. Positions 466-481 are enriched in polar residues; it reads TPASESAESLAVTETG.

It belongs to the FKBP-type PPIase family. Tig subfamily.

The protein localises to the cytoplasm. The enzyme catalyses [protein]-peptidylproline (omega=180) = [protein]-peptidylproline (omega=0). Its function is as follows. Involved in protein export. Acts as a chaperone by maintaining the newly synthesized protein in an open conformation. Functions as a peptidyl-prolyl cis-trans isomerase. The polypeptide is Trigger factor (Thermomicrobium roseum (strain ATCC 27502 / DSM 5159 / P-2)).